Here is a 981-residue protein sequence, read N- to C-terminus: Calsyntenin-1 (981 aa).

The signal sequence occupies residues 1 to 28 (MLRRPAPALAPAARLLLAGLLCGGGVWA). The Extracellular portion of the chain corresponds to 29-859 (ARVNKHKPWL…PHPFAVVPST (831 aa)). 2 consecutive Cadherin domains span residues 38–164 (LEPT…APVF) and 165–265 (KEKS…TPGW). Residues asparagine 346, asparagine 366, and asparagine 515 are each glycosylated (N-linked (GlcNAc...) asparagine). Residues 860–880 (ATVVIVVCVSFLVFMIILGVF) form a helical membrane-spanning segment. Residues 881–981 (RIRAAHRRTM…LEWDDSTLSY (101 aa)) lie on the Cytoplasmic side of the membrane. The segment at 915-981 (METYEDQHSS…LEWDDSTLSY (67 aa)) is disordered. Residues 925-960 (EEEEEEEEEEESEDGEEEDDITSAESESSEEEEGEQ) show a composition bias toward acidic residues. A compositionally biased stretch (polar residues) spans 962-981 (DPQNATRQQQLEWDDSTLSY).

The protein belongs to the calsyntenin family. Directly interacts with APBA2. Forms a tripartite complex with APBA2 and APP. Interacts with KLC1. As to quaternary structure, interacts with APBB1; this interaction stabilizes AlcICD metabolism. In terms of assembly, interacts with PSEN1. In terms of processing, proteolytically processed under normal cellular conditions. A primary zeta-cleavage generates a large extracellular (soluble) N-terminal domain (sAlc) and a short C-terminal transmembrane fragment (CTF1). A secondary cleavage catalyzed by presenilin gamma-secretase within the transmembrane domain releases the beta-Alc-alpha chain in the extracellular milieu and produces an intracellular fragment (AlcICD). This processing is strongly suppressed in the tripartite complex formed with APBA2 and APP, which seems to prevent the association with PSEN1. As to expression, expressed in the brain and, a lower level, in the heart, skeletal muscle, kidney and placenta. Accumulates in dystrophic neurites around the amyloid core of Alzheimer disease senile plaques (at protein level).

It is found in the postsynaptic cell membrane. It localises to the endoplasmic reticulum membrane. The protein localises to the golgi apparatus membrane. The protein resides in the cell projection. Its subcellular location is the neuron projection. It is found in the nucleus. Its function is as follows. Postsynaptic adhesion molecule that binds to presynaptic neurexins to mediate both excitatory and inhibitory synapse formation. Promotes synapse development by acting as a cell adhesion molecule at the postsynaptic membrane, which associates with neurexin-alpha at the presynaptic membrane. Also functions as a cargo in axonal anterograde transport by acting as a molecular adapter that promotes KLC1 association with vesicles. Complex formation with APBA2 and APP, stabilizes APP metabolism and enhances APBA2-mediated suppression of beta-APP40 secretion, due to the retardation of intracellular APP maturation. As intracellular fragment AlcICD, suppresses APBB1-dependent transactivation stimulated by APP C-terminal intracellular fragment (AICD), most probably by competing with AICD for APBB1-binding. In terms of biological role, in complex with APBA2 and C99, a C-terminal APP fragment, abolishes C99 interaction with PSEN1 and thus APP C99 cleavage by gamma-secretase, most probably through stabilization of the direct interaction between APBA2 and APP. The polypeptide is Calsyntenin-1 (Homo sapiens (Human)).